The primary structure comprises 293 residues: 4-hydroxybenzoate octaprenyltransferase (293 aa).

8 helical membrane-spanning segments follow: residues 19-39, 43-63, 95-115, 135-155, 158-178, 209-229, 231-251, and 266-286; these read PIGI…ASNG, WLIL…GCVV, LLAA…NALV, FFAI…PMSY, LWGE…FWAI, LTAI…VGAL, DFSG…VYHL, and FLHN…HFLL.

The protein belongs to the UbiA prenyltransferase family. The cofactor is Mg(2+).

The protein resides in the cell inner membrane. The catalysed reaction is all-trans-octaprenyl diphosphate + 4-hydroxybenzoate = 4-hydroxy-3-(all-trans-octaprenyl)benzoate + diphosphate. Its pathway is cofactor biosynthesis; ubiquinone biosynthesis. In terms of biological role, catalyzes the prenylation of para-hydroxybenzoate (PHB) with an all-trans polyprenyl group. Mediates the second step in the final reaction sequence of ubiquinone-8 (UQ-8) biosynthesis, which is the condensation of the polyisoprenoid side chain with PHB, generating the first membrane-bound Q intermediate 3-octaprenyl-4-hydroxybenzoate. The chain is 4-hydroxybenzoate octaprenyltransferase from Thiobacillus denitrificans (strain ATCC 25259 / T1).